Consider the following 468-residue polypeptide: Charged multivesicular body protein 7 (468 aa).

2 coiled-coil regions span residues 233–303 (EKLL…AETD) and 353–379 (VSDA…MIVD). The tract at residues 428 to 468 (DVPSGPVVISPQRPTEWKTDQASRSPADGSFSRSVPEPVLQ) is disordered.

The protein belongs to the SNF7 family.

The protein resides in the cytoplasm. Its subcellular location is the nucleus envelope. In terms of biological role, ESCRT-III-like protein required to recruit the ESCRT-III complex to the nuclear envelope during late anaphase. Together with SPAST, the ESCRT-III complex promotes nuclear envelope sealing and mitotic spindle disassembly during late anaphase. Plays a role in the endosomal sorting pathway. The protein is Charged multivesicular body protein 7 (chmp7) of Xenopus tropicalis (Western clawed frog).